The chain runs to 360 residues: Protein pelota homolog (360 aa).

Belongs to the eukaryotic release factor 1 family. Pelota subfamily. As to quaternary structure, monomer. It depends on a divalent metal cation as a cofactor.

Its subcellular location is the cytoplasm. Its function is as follows. May function in recognizing stalled ribosomes, interact with stem-loop structures in stalled mRNA molecules, and effect endonucleolytic cleavage of the mRNA. May play a role in the release non-functional ribosomes and degradation of damaged mRNAs. Has endoribonuclease activity. This is Protein pelota homolog from Hyperthermus butylicus (strain DSM 5456 / JCM 9403 / PLM1-5).